We begin with the raw amino-acid sequence, 166 residues long: Protein-export protein SecB (166 aa).

The protein belongs to the SecB family. In terms of assembly, homotetramer, a dimer of dimers. One homotetramer interacts with 1 SecA dimer.

The protein localises to the cytoplasm. In terms of biological role, one of the proteins required for the normal export of preproteins out of the cell cytoplasm. It is a molecular chaperone that binds to a subset of precursor proteins, maintaining them in a translocation-competent state. It also specifically binds to its receptor SecA. This is Protein-export protein SecB from Cereibacter sphaeroides (strain ATCC 17029 / ATH 2.4.9) (Rhodobacter sphaeroides).